The primary structure comprises 256 residues: Pimeloyl-[acyl-carrier protein] methyl ester esterase (256 aa).

The region spanning 15–242 (HLVLLHGWGL…AAHAPFISHP (228 aa)) is the AB hydrolase-1 domain. Substrate contacts are provided by residues tryptophan 22, 82–83 (SL), and 143–147 (FLALQ). The active-site Nucleophile is the serine 82. Residues aspartate 207 and histidine 235 contribute to the active site. Histidine 235 contacts substrate.

The protein belongs to the AB hydrolase superfamily. Carboxylesterase BioH family. As to quaternary structure, monomer.

It localises to the cytoplasm. It carries out the reaction 6-carboxyhexanoyl-[ACP] methyl ester + H2O = 6-carboxyhexanoyl-[ACP] + methanol + H(+). The protein operates within cofactor biosynthesis; biotin biosynthesis. The physiological role of BioH is to remove the methyl group introduced by BioC when the pimeloyl moiety is complete. It allows to synthesize pimeloyl-ACP via the fatty acid synthetic pathway through the hydrolysis of the ester bonds of pimeloyl-ACP esters. The polypeptide is Pimeloyl-[acyl-carrier protein] methyl ester esterase (Escherichia coli (strain 55989 / EAEC)).